Reading from the N-terminus, the 692-residue chain is Translation initiation factor IF-2 (692 aa).

Residues 51-114 form a disordered region; the sequence is KAKPENAKKG…KPAETPGKIT (64 aa). Residues 59–84 show a composition bias toward low complexity; the sequence is KGQNQKQSNNQQQNRQKQNQKNQSKP. Residues 85–94 show a composition bias toward basic residues; it reads NKNKKQKGPK. In terms of domain architecture, tr-type G spans 193 to 362; it reads ERPAVVTIMG…LLVSEVEELK (170 aa). Positions 202–209 are G1; it reads GHVDHGKT. 202–209 contributes to the GTP binding site; sequence GHVDHGKT. The interval 227–231 is G2; that stretch reads GITQH. Residues 248 to 251 are G3; the sequence is DTPG. Residues 248–252 and 302–305 each bind GTP; these read DTPGH and NKMD. The tract at residues 302–305 is G4; sequence NKMD. The segment at 338 to 340 is G5; that stretch reads SAI.

Belongs to the TRAFAC class translation factor GTPase superfamily. Classic translation factor GTPase family. IF-2 subfamily.

It localises to the cytoplasm. One of the essential components for the initiation of protein synthesis. Protects formylmethionyl-tRNA from spontaneous hydrolysis and promotes its binding to the 30S ribosomal subunits. Also involved in the hydrolysis of GTP during the formation of the 70S ribosomal complex. This chain is Translation initiation factor IF-2, found in Oceanobacillus iheyensis (strain DSM 14371 / CIP 107618 / JCM 11309 / KCTC 3954 / HTE831).